The primary structure comprises 279 residues: Thioredoxin-like 1-2, chloroplastic (279 aa).

The transit peptide at 1–34 (MAATAAQAVAVKGSVAVPPCGSRGRRRGAVASVR) directs the protein to the chloroplast. Residues 61–203 (PRRSRPVPRN…FRDALAKHKP (143 aa)) form the Thioredoxin domain. Residues C126 and C129 each act as nucleophile in the active site. Residues C126 and C129 are joined by a disulfide bond. A disordered region spans residues 242 to 279 (GDAAAAQELDRGSTKLSPPAKPLVKQGSEERSLVSSGR).

This sequence belongs to the thioredoxin family.

Its subcellular location is the plastid. The protein localises to the chloroplast. Its function is as follows. Probable thiol-disulfide oxidoreductase that may participate in various redox reactions. In Oryza sativa subsp. japonica (Rice), this protein is Thioredoxin-like 1-2, chloroplastic.